Here is a 559-residue protein sequence, read N- to C-terminus: Transcription activator of gluconeogenesis ERT1-2 (559 aa).

Residues 23-51 (CIHCQRTHLTCDNNRPCERCVARGFADTC) constitute a DNA-binding region (zn(2)-C6 fungal-type). Disordered regions lie at residues 63–159 (DDKE…TPSQ), 231–263 (SNSL…TPSA), and 329–349 (AGQP…DSPS). Composition is skewed to low complexity over residues 139-159 (QGPQ…TPSQ) and 231-244 (SNSL…QSPN). The segment covering 245–260 (THSPHNQDQPTPQAAT) has biased composition (polar residues). A PAS domain is found at 440 to 512 (ALLEYQKFIS…ELFSRIAFGD (73 aa)).

The protein belongs to the ERT1/acuK family.

The protein localises to the nucleus. Functionally, transcription factor which regulates nonfermentable carbon utilization. Activator of gluconeogenetic genes. The protein is Transcription activator of gluconeogenesis ERT1-2 (ERT1-2) of Yarrowia lipolytica (strain CLIB 122 / E 150) (Yeast).